The primary structure comprises 86 residues: Putative membrane protein insertion efficiency factor (86 aa).

It belongs to the UPF0161 family.

The protein localises to the cell inner membrane. In terms of biological role, could be involved in insertion of integral membrane proteins into the membrane. The chain is Putative membrane protein insertion efficiency factor from Histophilus somni (strain 129Pt) (Haemophilus somnus).